Here is a 437-residue protein sequence, read N- to C-terminus: uncharacterized protein (437 aa).

The segment covering 63–87 (PSSANVSFQNSDDNLSTSRGRSASP) has biased composition (polar residues). Disordered stretches follow at residues 63-97 (PSSA…SNFP), 112-147 (VKKD…KKET), and 346-437 (PKNA…YSIW). The segment covering 399-409 (EALSPSKSNPD) has biased composition (polar residues). Over residues 425–437 (KKPSSSSSNYSIW) the composition is skewed to low complexity.

This is an uncharacterized protein from Caenorhabditis elegans.